The following is a 315-amino-acid chain: tRNA dimethylallyltransferase (315 aa).

An ATP-binding site is contributed by 13-20 (GPTASGKT). A substrate-binding site is contributed by 15–20 (TASGKT). 4 interaction with substrate tRNA regions span residues 38–41 (DSAL), 162–166 (QRLSR), 243–248 (RCVGYR), and 276–283 (KRQITWLR).

The protein belongs to the IPP transferase family. As to quaternary structure, monomer. It depends on Mg(2+) as a cofactor.

The enzyme catalyses adenosine(37) in tRNA + dimethylallyl diphosphate = N(6)-dimethylallyladenosine(37) in tRNA + diphosphate. Functionally, catalyzes the transfer of a dimethylallyl group onto the adenine at position 37 in tRNAs that read codons beginning with uridine, leading to the formation of N6-(dimethylallyl)adenosine (i(6)A). The protein is tRNA dimethylallyltransferase of Vibrio vulnificus (strain YJ016).